The primary structure comprises 359 residues: Outer membrane protein assembly factor BamC (359 aa).

The signal sequence occupies residues 1–21 (MSTLNKYKTLIIISSLAAVSS). Cys-22 carries N-palmitoyl cysteine lipidation. Residue Cys-22 is the site of S-diacylglycerol cysteine attachment.

The protein belongs to the BamC family. Part of the Bam complex.

The protein resides in the cell outer membrane. Part of the outer membrane protein assembly complex, which is involved in assembly and insertion of beta-barrel proteins into the outer membrane. In Kangiella koreensis (strain DSM 16069 / JCM 12317 / KCTC 12182 / SW-125), this protein is Outer membrane protein assembly factor BamC.